Here is a 241-residue protein sequence, read N- to C-terminus: Small ribosomal subunit protein uS3c (241 aa).

It belongs to the universal ribosomal protein uS3 family. Part of the 30S ribosomal subunit.

The protein resides in the plastid. The polypeptide is Small ribosomal subunit protein uS3c (rps3) (Helicosporidium sp. subsp. Simulium jonesii (Green alga)).